The following is a 184-amino-acid chain: Spiro-conjugate synthase (184 aa).

An intrachain disulfide couples Cys57 to Cys184. Residue Gln115 coordinates (1S,3R,6R,8R,9R,11R,14S,15S,19R,20R)-8-ethyl-9,15-dihydroxy-3,4,6,20-tetramethyl-21,23-dioxo-24-azapentacyclo[20.2.1.0(1,6).0(11,20).0(14,19)]pentacosa-4,12,22(25)-trien-25-olate.

In terms of assembly, homodimer.

It catalyses the reaction 4-[(1R,2R,4aS,5S,8aR)-2-[(2R,3R,5E,7E)-3-ethyl-2-hydroxy-5,7-dimethylnona-5,7-dien-1-yl]-5-hydroxy-1-methyl-1,2,4a,5,6,7,8,8a-octahydronaphthalene-1-carbonyl]-2-methylidene-5-oxo-2,5-dihydro-1H-pyrrol-3-olate = (1S,3R,6R,8R,9R,11R,14S,15S,19R,20R)-8-ethyl-9,15-dihydroxy-3,4,6,20-tetramethyl-21,23-dioxo-24-azapentacyclo[20.2.1.0(1,6).0(11,20).0(14,19)]pentacosa-4,12,22(25)-trien-25-olate. It participates in antibiotic biosynthesis. Functionally, involved in the biosynthesis of the spirotetramate antibiotics pyrroindomycins. Catalyzes the intramolecular cyclization forming the spiro-conjugate moiety in pyrroindomycins, via an exo-selective [4+2] cycloaddition reaction. This is Spiro-conjugate synthase from Streptomyces rugosporus.